A 335-amino-acid chain; its full sequence is MTYSKNVFIPVTNICRNQCGYCGFRREPGQPGARLMKPEEVISVLENGVRAGCTEALFTFGERAEEVPGYGEMLEEIGYSSTLEYLVFLCETAIDIGILPHTNAGIMTRSELEALKPLNASMGLMLESTAVLAAHKDCPGKIPERRLETIREAGKLKIPYTTGLLIGIGESRDDRIESLEAIAALHREYGHIQEVIIQNFAPKPGTEMENFPEPAVEEMMDSVELAARILPGDVAVQVAPNLIDPKSLIAKGVTDLGGISPLTIDWINPEAEWPDVKNLQKKLGDIPLKERLPVYPPYVKKGWYSERIGSLIKRLSDNSGYRKQPGTENAEDSEK.

The Radical SAM core domain occupies 1–246; it reads MTYSKNVFIP…QVAPNLIDPK (246 aa). Positions 15, 19, and 22 each coordinate [4Fe-4S] cluster.

It belongs to the radical SAM superfamily. CofG family. In terms of assembly, consists of two subunits, CofG and CofH. The cofactor is [4Fe-4S] cluster.

The enzyme catalyses 5-amino-5-(4-hydroxybenzyl)-6-(D-ribitylimino)-5,6-dihydrouracil + S-adenosyl-L-methionine = 7,8-didemethyl-8-hydroxy-5-deazariboflavin + 5'-deoxyadenosine + L-methionine + NH4(+) + H(+). It participates in cofactor biosynthesis; coenzyme F0 biosynthesis. Its function is as follows. Catalyzes the radical-mediated synthesis of 7,8-didemethyl-8-hydroxy-5-deazariboflavin from 5-amino-5-(4-hydroxybenzyl)-6-(D-ribitylimino)-5,6-dihydrouracil. This Methanosarcina mazei (strain ATCC BAA-159 / DSM 3647 / Goe1 / Go1 / JCM 11833 / OCM 88) (Methanosarcina frisia) protein is 7,8-didemethyl-8-hydroxy-5-deazariboflavin synthase.